The sequence spans 101 residues: NAD(P)H-quinone oxidoreductase subunit 4L, chloroplastic (101 aa).

3 helical membrane passes run 2 to 22 (MLEHVLVLSAYLFSIGIYGLI), 32 to 52 (MCLELILNAVNMNLVTFSDLF), and 61 to 81 (IFSIFVIAIAAAEAAIGPAIV).

It belongs to the complex I subunit 4L family. As to quaternary structure, NDH is composed of at least 16 different subunits, 5 of which are encoded in the nucleus.

Its subcellular location is the plastid. It is found in the chloroplast thylakoid membrane. The enzyme catalyses a plastoquinone + NADH + (n+1) H(+)(in) = a plastoquinol + NAD(+) + n H(+)(out). The catalysed reaction is a plastoquinone + NADPH + (n+1) H(+)(in) = a plastoquinol + NADP(+) + n H(+)(out). In terms of biological role, NDH shuttles electrons from NAD(P)H:plastoquinone, via FMN and iron-sulfur (Fe-S) centers, to quinones in the photosynthetic chain and possibly in a chloroplast respiratory chain. The immediate electron acceptor for the enzyme in this species is believed to be plastoquinone. Couples the redox reaction to proton translocation, and thus conserves the redox energy in a proton gradient. In Chloranthus spicatus (Chulantree), this protein is NAD(P)H-quinone oxidoreductase subunit 4L, chloroplastic.